Here is a 127-residue protein sequence, read N- to C-terminus: Holo-[acyl-carrier-protein] synthase (127 aa).

Residues Asp-7 and Glu-53 each contribute to the Mg(2+) site.

The protein belongs to the P-Pant transferase superfamily. AcpS family. Mg(2+) serves as cofactor.

Its subcellular location is the cytoplasm. The catalysed reaction is apo-[ACP] + CoA = holo-[ACP] + adenosine 3',5'-bisphosphate + H(+). Its function is as follows. Transfers the 4'-phosphopantetheine moiety from coenzyme A to a Ser of acyl-carrier-protein. The chain is Holo-[acyl-carrier-protein] synthase from Herpetosiphon aurantiacus (strain ATCC 23779 / DSM 785 / 114-95).